The chain runs to 294 residues: UPF0718 protein YcgR (294 aa).

Helical transmembrane passes span 15-35, 54-74, 92-112, 117-137, 174-194, 215-235, 247-267, and 273-293; these read ISIL…SGII, LAVL…CGII, AFML…YIAF, SVVF…GVIL, IDEF…AAAM, LVMM…AFIA, LIAF…MMLA, and FVFL…LLVK.

It belongs to the UPF0718 family.

It localises to the cell membrane. This Bacillus subtilis (strain 168) protein is UPF0718 protein YcgR (ycgR).